A 345-amino-acid chain; its full sequence is Holliday junction branch migration complex subunit RuvB (345 aa).

Residues 4 to 182 (PDRIVSAVQR…FGIPIRLEFY (179 aa)) are large ATPase domain (RuvB-L). ATP contacts are provided by residues R22, G63, K66, T67, T68, 129–131 (EDY), R172, Y182, and R219. T67 serves as a coordination point for Mg(2+). Positions 183–253 (TVDELQAIVT…IADAALSRLE (71 aa)) are small ATPAse domain (RuvB-S). Residues 256–345 (ALGLDQLDRR…QSQINLFEEE (90 aa)) form a head domain (RuvB-H) region. DNA contacts are provided by R292, R311, and R316.

This sequence belongs to the RuvB family. In terms of assembly, homohexamer. Forms an RuvA(8)-RuvB(12)-Holliday junction (HJ) complex. HJ DNA is sandwiched between 2 RuvA tetramers; dsDNA enters through RuvA and exits via RuvB. An RuvB hexamer assembles on each DNA strand where it exits the tetramer. Each RuvB hexamer is contacted by two RuvA subunits (via domain III) on 2 adjacent RuvB subunits; this complex drives branch migration. In the full resolvosome a probable DNA-RuvA(4)-RuvB(12)-RuvC(2) complex forms which resolves the HJ.

The protein resides in the cytoplasm. The enzyme catalyses ATP + H2O = ADP + phosphate + H(+). In terms of biological role, the RuvA-RuvB-RuvC complex processes Holliday junction (HJ) DNA during genetic recombination and DNA repair, while the RuvA-RuvB complex plays an important role in the rescue of blocked DNA replication forks via replication fork reversal (RFR). RuvA specifically binds to HJ cruciform DNA, conferring on it an open structure. The RuvB hexamer acts as an ATP-dependent pump, pulling dsDNA into and through the RuvAB complex. RuvB forms 2 homohexamers on either side of HJ DNA bound by 1 or 2 RuvA tetramers; 4 subunits per hexamer contact DNA at a time. Coordinated motions by a converter formed by DNA-disengaged RuvB subunits stimulates ATP hydrolysis and nucleotide exchange. Immobilization of the converter enables RuvB to convert the ATP-contained energy into a lever motion, pulling 2 nucleotides of DNA out of the RuvA tetramer per ATP hydrolyzed, thus driving DNA branch migration. The RuvB motors rotate together with the DNA substrate, which together with the progressing nucleotide cycle form the mechanistic basis for DNA recombination by continuous HJ branch migration. Branch migration allows RuvC to scan DNA until it finds its consensus sequence, where it cleaves and resolves cruciform DNA. The sequence is that of Holliday junction branch migration complex subunit RuvB from Chelativorans sp. (strain BNC1).